A 415-amino-acid chain; its full sequence is Serine hydroxymethyltransferase (415 aa).

Residues Leu117 and 121–123 (GHL) contribute to the (6S)-5,6,7,8-tetrahydrofolate site. The residue at position 226 (Lys226) is an N6-(pyridoxal phosphate)lysine.

This sequence belongs to the SHMT family. In terms of assembly, homodimer. Pyridoxal 5'-phosphate serves as cofactor.

The protein localises to the cytoplasm. It catalyses the reaction (6R)-5,10-methylene-5,6,7,8-tetrahydrofolate + glycine + H2O = (6S)-5,6,7,8-tetrahydrofolate + L-serine. It functions in the pathway one-carbon metabolism; tetrahydrofolate interconversion. The protein operates within amino-acid biosynthesis; glycine biosynthesis; glycine from L-serine: step 1/1. Functionally, catalyzes the reversible interconversion of serine and glycine with tetrahydrofolate (THF) serving as the one-carbon carrier. This reaction serves as the major source of one-carbon groups required for the biosynthesis of purines, thymidylate, methionine, and other important biomolecules. Also exhibits THF-independent aldolase activity toward beta-hydroxyamino acids, producing glycine and aldehydes, via a retro-aldol mechanism. The protein is Serine hydroxymethyltransferase of Dehalococcoides mccartyi (strain ATCC BAA-2266 / KCTC 15142 / 195) (Dehalococcoides ethenogenes (strain 195)).